The chain runs to 102 residues: MALNEQDVARIARLARIELTPDQRGRAQAELNGILHLIERLQAVDTQGVEPLAHPLSAHEDITLRLREDAVSEQATEARRAELLANAPESADGLFLVPKVIE.

This sequence belongs to the GatC family. As to quaternary structure, heterotrimer of A, B and C subunits.

The catalysed reaction is L-glutamyl-tRNA(Gln) + L-glutamine + ATP + H2O = L-glutaminyl-tRNA(Gln) + L-glutamate + ADP + phosphate + H(+). It catalyses the reaction L-aspartyl-tRNA(Asn) + L-glutamine + ATP + H2O = L-asparaginyl-tRNA(Asn) + L-glutamate + ADP + phosphate + 2 H(+). In terms of biological role, allows the formation of correctly charged Asn-tRNA(Asn) or Gln-tRNA(Gln) through the transamidation of misacylated Asp-tRNA(Asn) or Glu-tRNA(Gln) in organisms which lack either or both of asparaginyl-tRNA or glutaminyl-tRNA synthetases. The reaction takes place in the presence of glutamine and ATP through an activated phospho-Asp-tRNA(Asn) or phospho-Glu-tRNA(Gln). This Bordetella pertussis (strain Tohama I / ATCC BAA-589 / NCTC 13251) protein is Aspartyl/glutamyl-tRNA(Asn/Gln) amidotransferase subunit C.